A 79-amino-acid chain; its full sequence is Conotoxin Tr6.3 (79 aa).

Residues 1 to 22 (MKLTCVLIISVLFLTASQLITA) form the signal peptide. A propeptide spanning residues 23 to 47 (VYSRDKQQYRAARLRDEMRNLKGAR) is cleaved from the precursor. 3 disulfide bridges follow: C49–C62, C56–C67, and C61–C77. Residues P60 and P63 each carry the 4-hydroxyproline modification.

The protein belongs to the conotoxin O1 superfamily. In terms of tissue distribution, expressed by the venom duct.

Its subcellular location is the secreted. In terms of biological role, ion channel inhibitor that inhibits the increase in intracellular calcium upon depolarization in DRG neurons. In vivo, both intraperitoneal and intracranial injections into mice induce hyperactivity. The sequence is that of Conotoxin Tr6.3 from Conus terebra (Sea snail).